The following is a 102-amino-acid chain: Monothiol glutaredoxin-S1 (102 aa).

One can recognise a Glutaredoxin domain in the interval 1-101; sequence MEKISNLLED…SLLRRAGAIW (101 aa). Position 21 (Cys-21) interacts with [2Fe-2S] cluster.

It belongs to the glutaredoxin family. CC-type subfamily.

It is found in the cytoplasm. May only reduce GSH-thiol disulfides, but not protein disulfides. This Arabidopsis thaliana (Mouse-ear cress) protein is Monothiol glutaredoxin-S1 (GRXS1).